A 622-amino-acid chain; its full sequence is Threonine--tRNA ligase (622 aa).

Residues 1-141 (MKTLLIHSDY…SRKITTERKE (141 aa)) form an editing domain region. Residues 199–498 (PHVKYIKEKE…TLENKPPALP (300 aa)) form a catalytic region. Zn(2+) contacts are provided by Cys291, His343, and His467.

The protein belongs to the class-II aminoacyl-tRNA synthetase family. Homodimer. Zn(2+) serves as cofactor.

Its subcellular location is the cytoplasm. The catalysed reaction is tRNA(Thr) + L-threonine + ATP = L-threonyl-tRNA(Thr) + AMP + diphosphate + H(+). Its function is as follows. Catalyzes the attachment of threonine to tRNA(Thr) in a two-step reaction: L-threonine is first activated by ATP to form Thr-AMP and then transferred to the acceptor end of tRNA(Thr). Also edits incorrectly charged L-seryl-tRNA(Thr). This chain is Threonine--tRNA ligase, found in Methanococcus maripaludis (strain C5 / ATCC BAA-1333).